Consider the following 295-residue polypeptide: RNA polymerase sigma-C factor (295 aa).

A Polymerase core binding motif is present at residues 73–86 (DLIQEANIGLMKAV). Positions 250 to 269 (LSELGEHFGFSRERARQLEI) form a DNA-binding region, H-T-H motif.

Belongs to the sigma-70 factor family.

Sigma factors are initiation factors that promote the attachment of RNA polymerase to specific initiation sites and are then released. This sigma factor is essential for normal fruiting body formation. This Myxococcus xanthus protein is RNA polymerase sigma-C factor (sigC).